Reading from the N-terminus, the 453-residue chain is MEKPSLPKGTRDFGPAQMLKRQYLLQTIREIFTKYGFLPIETPAMENLSVLTGKYGDEGDQLIYKILNSGDFIQGVEQNHLQEGYKKLIPKISKKALRYDLTVPFARHVVMNRNDITFPFKRYQIQPVWRADRPQKGRYCEFMQCDADVVGTDSLLCEAEIVLMIHEAFAALGITDFVVKINNRKILSGIADAIGKEGSEAELCVAIDKLDKIGKEAVLEELKTKGFTDSQLTRLLPVFDLKGNNAEIFPLLRTILAQSSVGLKGIDELEKVFTLIEKSGLGNASIETDLTLARGLSYYTGAIFEVKILNVQMGSVCGGGRYDNLTGVFGLPNVSGVGISFGIDRIYDVMNELNLFPSQESNSTRLLICAFDENTFMHALPMVTKLRAQGINTELYPDPVKIKKQLSYADDKKIPFALLIGEDEMNQGLYSLKNLISGEQFKVTFDEVVHKLI.

The protein belongs to the class-II aminoacyl-tRNA synthetase family. Homodimer.

The protein localises to the cytoplasm. It catalyses the reaction tRNA(His) + L-histidine + ATP = L-histidyl-tRNA(His) + AMP + diphosphate + H(+). In Cytophaga hutchinsonii (strain ATCC 33406 / DSM 1761 / CIP 103989 / NBRC 15051 / NCIMB 9469 / D465), this protein is Histidine--tRNA ligase.